A 351-amino-acid chain; its full sequence is Biotin synthase (351 aa).

The region spanning 58-285 is the Radical SAM core domain; the sequence is NTVQLSTLLS…RAMVRLSAGR (228 aa). Residues Cys73, Cys77, and Cys80 each contribute to the [4Fe-4S] cluster site. [2Fe-2S] cluster is bound by residues Cys117, Cys148, Cys208, and Arg280.

It belongs to the radical SAM superfamily. Biotin synthase family. Homodimer. Requires [4Fe-4S] cluster as cofactor. The cofactor is [2Fe-2S] cluster.

It catalyses the reaction (4R,5S)-dethiobiotin + (sulfur carrier)-SH + 2 reduced [2Fe-2S]-[ferredoxin] + 2 S-adenosyl-L-methionine = (sulfur carrier)-H + biotin + 2 5'-deoxyadenosine + 2 L-methionine + 2 oxidized [2Fe-2S]-[ferredoxin]. It functions in the pathway cofactor biosynthesis; biotin biosynthesis; biotin from 7,8-diaminononanoate: step 2/2. Its function is as follows. Catalyzes the conversion of dethiobiotin (DTB) to biotin by the insertion of a sulfur atom into dethiobiotin via a radical-based mechanism. In Paraburkholderia phymatum (strain DSM 17167 / CIP 108236 / LMG 21445 / STM815) (Burkholderia phymatum), this protein is Biotin synthase.